We begin with the raw amino-acid sequence, 345 residues long: Probable deoxyhypusine synthase 2 (345 aa).

Catalysis depends on Lys-292, which acts as the Nucleophile.

It belongs to the deoxyhypusine synthase family. NAD(+) serves as cofactor.

The catalysed reaction is [eIF5A protein]-L-lysine + spermidine = [eIF5A protein]-deoxyhypusine + propane-1,3-diamine. The protein operates within protein modification; eIF5A hypusination. In terms of biological role, catalyzes the NAD-dependent oxidative cleavage of spermidine and the subsequent transfer of the butylamine moiety of spermidine to the epsilon-amino group of a specific lysine residue of the eIF-5A precursor protein to form the intermediate deoxyhypusine residue. This Methanosarcina mazei (strain ATCC BAA-159 / DSM 3647 / Goe1 / Go1 / JCM 11833 / OCM 88) (Methanosarcina frisia) protein is Probable deoxyhypusine synthase 2 (dys2).